The primary structure comprises 466 residues: Neuropeptide Y receptor type 5 (466 aa).

At 1-63 (MEVKLEEHFN…YRGSVDDLQY (63 aa)) the chain is on the extracellular side. N-linked (GlcNAc...) asparagine glycans are attached at residues Asn-10, Asn-17, Asn-38, and Asn-39. A helical transmembrane segment spans residues 64-84 (FLIGLYTFVSLLGFMGNLLIL). The Cytoplasmic segment spans residues 85–98 (MAVMKKRNQKTTVN). Residues 99 to 119 (FLIGNLAFSDILVVLFCSPFT) form a helical membrane-spanning segment. Residues 120–138 (LTSVLLDQWMFGKAMCHIM) lie on the Extracellular side of the membrane. Cys-135 and Cys-219 are oxidised to a cystine. A helical membrane pass occupies residues 139–159 (PFLQCVSVLVSTLILISIAIV). Residues 160–177 (RYHMIKHPISNNLTANHG) are Cytoplasmic-facing. A helical transmembrane segment spans residues 178-198 (YFLIATVWTLGFAICSPLPVF). At 199–229 (HSLVELKETFGSALLSSKYLCVESWPSDSYR) the chain is on the extracellular side. Residues 230–250 (IAFTISLLLVQYILPLVCLTV) form a helical membrane-spanning segment. Residues 251 to 389 (SHTSVCRSIS…KKRSRSVFYR (139 aa)) are Cytoplasmic-facing. Residues 323–346 (GPSQEKHLTVPENPGSVRSQLSPS) are disordered. Residues 390–410 (LTILILVFAVSWMPLHVFHVV) traverse the membrane as a helical segment. Residues 411–427 (TDFNDNLISNRHFKLVY) lie on the Extracellular side of the membrane. The chain crosses the membrane as a helical span at residues 428-448 (CICHLLGMMSCCLNPILYGFL). The Cytoplasmic portion of the chain corresponds to 449-466 (NNGIKADLRALIHCLHMS). Cys-462 is lipidated: S-palmitoyl cysteine.

Belongs to the G-protein coupled receptor 1 family.

It localises to the cell membrane. Functionally, receptor for neuropeptide Y and peptide YY. The activity of this receptor is mediated by G proteins that inhibit adenylate cyclase activity. Seems to be associated with food intake. Could be involved in feeding disorders. This Mus musculus (Mouse) protein is Neuropeptide Y receptor type 5 (Npy5r).